A 64-amino-acid chain; its full sequence is Large ribosomal subunit protein bL35 (64 aa).

It belongs to the bacterial ribosomal protein bL35 family.

The chain is Large ribosomal subunit protein bL35 from Chloroherpeton thalassium (strain ATCC 35110 / GB-78).